A 271-amino-acid polypeptide reads, in one-letter code: Arginine and glutamate-rich protein 1 (271 aa).

Composition is skewed to basic residues over residues 1-29 (MGRS…RSRS) and 37-58 (VRKR…RSRS). The segment at 1 to 72 (MGRSRSRSSS…AAASRRERER (72 aa)) is necessary and sufficient for RNA binding. Positions 1-112 (MGRSRSRSSS…EKKAEFERQR (112 aa)) are disordered. Phosphoserine is present on residues S58 and S60. Phosphothreonine is present on T61. Basic and acidic residues-rich tracts occupy residues 66–82 (SRRE…RIDI) and 91–112 (SSLD…ERQR). The tract at residues 73-271 (ASSPPDRIDI…KLSFSLKTQD (199 aa)) is necessary and sufficient for transcriptional regulation. S74 and S75 each carry phosphoserine. The short motif at 170 to 174 (LLEEL) is the LXXLL motif 1; degenerate element. An LXXLL motif 2; degenerate motif is present at residues 199 to 203 (LERIL). A compositionally biased stretch (basic and acidic residues) spans 236–251 (MKLEQERQRQQKEEQK). The disordered stretch occupies residues 236 to 271 (MKLEQERQRQQKEEQKIILGKGKSRPKLSFSLKTQD). S264 carries the post-translational modification Phosphoserine.

This sequence belongs to the ARGLU1 family. As to quaternary structure, interacts with MED1; the interaction is direct. Interacts with PUF60, U2AF2 and JMJD6; may interact with other proteins involved in RNA processing and splicing. As to expression, high expression levels in the neocortex, hippocampus and thalamus but low expression levels in the midbrain and hindbrain (at protein level). Ubiquitously expressed with highest expression levels in the central nervous system and low expression in uterus and pancreas.

It localises to the nucleus. It is found in the nucleus speckle. The protein resides in the chromosome. Dual function regulator of gene expression; regulator of transcription and modulator of alternative splicing. General coactivator of nuclear receptor-induced gene expression, including genes activated by the glucocorticoid receptor NR3C1. Binds to a subset of pre-mRNAs and to components of the spliceosome machinery to directly modulate basal alternative splicing; involved in simple and complex cassette exon splicing events. Binds its own pre-mRNA and regulates its alternative splicing and degradation; one of the alternatively spliced products is a stable intronic sequence RNA (sisRNA) that binds the protein to regulate its ability to affect splicing. Binding of the sisRNA stimulates phase separation and localization to nuclear speckles, which may contribute to activation of nuclear receptor-induced gene expression. May also indirectly modulate alternative splicing. Regulates transcription of genes involved in heart development, neuronal cell function, protein localization and chromatin localization. Regulates splicing of genes involved in neurogenesis and chromatin organization. Essential for central nervous system development. Required for the estrogen-dependent expression of ESR1 target genes. Can act in cooperation with MED1. This is Arginine and glutamate-rich protein 1 (Arglu1) from Mus musculus (Mouse).